The primary structure comprises 482 residues: Alpha-ketoglutarate semialdehyde dehydrogenase (482 aa).

The interval 1 to 28 (MTDPSKNYVNGEWVTSETGETTEVTNPA) is disordered. Residues 11–25 (GEWVTSETGETTEVT) are compositionally biased toward low complexity. Residue Cys-284 is part of the active site.

Belongs to the aldehyde dehydrogenase family. In terms of assembly, homotetramer.

It carries out the reaction 2,5-dioxopentanoate + NADP(+) + H2O = 2-oxoglutarate + NADPH + 2 H(+). The protein operates within carbohydrate metabolism; D-xylose degradation. Alpha-ketoglutarate semialdehyde dehydrogenase involved in the degradation of D-xylose, a major component of hemicelluloses such as xylan. Catalyzes the fifth reaction in the xylose utilization pathway through dehydratation of alpha-ketoglutarate semialdehyde (2,5-dioxopentanoate) into alpha-ketoglutarate. The polypeptide is Alpha-ketoglutarate semialdehyde dehydrogenase (Haloferax volcanii (strain ATCC 29605 / DSM 3757 / JCM 8879 / NBRC 14742 / NCIMB 2012 / VKM B-1768 / DS2) (Halobacterium volcanii)).